Here is a 313-residue protein sequence, read N- to C-terminus: Aspartate carbamoyltransferase catalytic subunit (313 aa).

Positions 61 and 62 each coordinate carbamoyl phosphate. Lys89 serves as a coordination point for L-aspartate. Residues Arg111, His139, and Gln142 each coordinate carbamoyl phosphate. The L-aspartate site is built by Arg172 and Arg227. 2 residues coordinate carbamoyl phosphate: Gly268 and Pro269.

It belongs to the aspartate/ornithine carbamoyltransferase superfamily. ATCase family. As to quaternary structure, heterododecamer (2C3:3R2) of six catalytic PyrB chains organized as two trimers (C3), and six regulatory PyrI chains organized as three dimers (R2).

It catalyses the reaction carbamoyl phosphate + L-aspartate = N-carbamoyl-L-aspartate + phosphate + H(+). The protein operates within pyrimidine metabolism; UMP biosynthesis via de novo pathway; (S)-dihydroorotate from bicarbonate: step 2/3. In terms of biological role, catalyzes the condensation of carbamoyl phosphate and aspartate to form carbamoyl aspartate and inorganic phosphate, the committed step in the de novo pyrimidine nucleotide biosynthesis pathway. The sequence is that of Aspartate carbamoyltransferase catalytic subunit from Gluconobacter oxydans (strain 621H) (Gluconobacter suboxydans).